The primary structure comprises 238 residues: 2-C-methyl-D-erythritol 4-phosphate cytidylyltransferase (238 aa).

The protein belongs to the IspD/TarI cytidylyltransferase family. IspD subfamily.

It catalyses the reaction 2-C-methyl-D-erythritol 4-phosphate + CTP + H(+) = 4-CDP-2-C-methyl-D-erythritol + diphosphate. Its pathway is isoprenoid biosynthesis; isopentenyl diphosphate biosynthesis via DXP pathway; isopentenyl diphosphate from 1-deoxy-D-xylulose 5-phosphate: step 2/6. Catalyzes the formation of 4-diphosphocytidyl-2-C-methyl-D-erythritol from CTP and 2-C-methyl-D-erythritol 4-phosphate (MEP). The sequence is that of 2-C-methyl-D-erythritol 4-phosphate cytidylyltransferase from Aliivibrio fischeri (strain MJ11) (Vibrio fischeri).